Reading from the N-terminus, the 295-residue chain is tRNA dimethylallyltransferase (295 aa).

11 to 18 (GPTVSGKS) contacts ATP. Residue 13-18 (TVSGKS) participates in substrate binding. Interaction with substrate tRNA regions lie at residues 36–39 (DSMQ) and 158–162 (QRIIR).

This sequence belongs to the IPP transferase family. Monomer. It depends on Mg(2+) as a cofactor.

It carries out the reaction adenosine(37) in tRNA + dimethylallyl diphosphate = N(6)-dimethylallyladenosine(37) in tRNA + diphosphate. Catalyzes the transfer of a dimethylallyl group onto the adenine at position 37 in tRNAs that read codons beginning with uridine, leading to the formation of N6-(dimethylallyl)adenosine (i(6)A). The protein is tRNA dimethylallyltransferase of Bartonella quintana (strain Toulouse) (Rochalimaea quintana).